The chain runs to 510 residues: Ectonucleoside triphosphate diphosphohydrolase 1 (510 aa).

Topologically, residues 1 to 16 are cytoplasmic; it reads MEDRRESELKTFCSKN. Residues 17 to 37 form a helical membrane-spanning segment; the sequence is ILVILGFSSIIAVIALLALGL. At 38-477 the chain is on the extracellular side; the sequence is TQNKPLPENV…SSTRLSHSTY (440 aa). The N-linked (GlcNAc...) asparagine glycan is linked to asparagine 73. Cysteine 84 and cysteine 108 are disulfide-bonded. Glutamate 174 serves as the catalytic Proton acceptor. N-linked (GlcNAc...) asparagine glycans are attached at residues asparagine 245, asparagine 274, asparagine 291, and asparagine 333. 2 cysteine pairs are disulfide-bonded: cysteine 255–cysteine 300 and cysteine 281–cysteine 324. The cysteines at positions 337 and 342 are disulfide-linked. N-linked (GlcNAc...) asparagine glycosylation occurs at asparagine 370. Cysteine 390 and cysteine 413 are oxidised to a cystine. N-linked (GlcNAc...) asparagine glycosylation is present at asparagine 457. The chain crosses the membrane as a helical span at residues 478 to 498; it reads VFLMVLFSLILVIVVIIGLFV. At 499–510 the chain is on the cytoplasmic side; that stretch reads CHRPSYFWKDMV.

Belongs to the GDA1/CD39 NTPase family. As to quaternary structure, homodimer; disulfide-linked. The cofactor is Ca(2+). It depends on Mg(2+) as a cofactor. N-glycosylated. In terms of processing, cleaved into two polypeptides that seem to stay together by non-covalent interactions. Post-translationally, the N-terminus is blocked. Palmitoylated on Cys-13; which is required for caveola targeting. In terms of tissue distribution, highest expression found in vascular endothelium, smooth muscle, spleen and lung (at protein level). High expression also found in stomach, duodenum, kidney, lymph node and aorta (at protein level).

Its subcellular location is the membrane. It is found in the caveola. It carries out the reaction a ribonucleoside 5'-triphosphate + 2 H2O = a ribonucleoside 5'-phosphate + 2 phosphate + 2 H(+). It catalyses the reaction a ribonucleoside 5'-triphosphate + H2O = a ribonucleoside 5'-diphosphate + phosphate + H(+). The catalysed reaction is a ribonucleoside 5'-diphosphate + H2O = a ribonucleoside 5'-phosphate + phosphate + H(+). The enzyme catalyses ATP + 2 H2O = AMP + 2 phosphate + 2 H(+). It carries out the reaction ATP + H2O = ADP + phosphate + H(+). It catalyses the reaction ADP + H2O = AMP + phosphate + H(+). The catalysed reaction is CTP + 2 H2O = CMP + 2 phosphate + 2 H(+). The enzyme catalyses CTP + H2O = CDP + phosphate + H(+). It carries out the reaction CDP + H2O = CMP + phosphate + H(+). It catalyses the reaction GTP + 2 H2O = GMP + 2 phosphate + 2 H(+). The catalysed reaction is GTP + H2O = GDP + phosphate + H(+). The enzyme catalyses GDP + H2O = GMP + phosphate + H(+). It carries out the reaction ITP + 2 H2O = IMP + 2 phosphate + 2 H(+). It catalyses the reaction ITP + H2O = IDP + phosphate + H(+). The catalysed reaction is IDP + H2O = IMP + phosphate + H(+). The enzyme catalyses UTP + 2 H2O = UMP + 2 phosphate + 2 H(+). It carries out the reaction UTP + H2O = UDP + phosphate + H(+). It catalyses the reaction UDP + H2O = UMP + phosphate + H(+). The ATP diphosphohydrolase activity is decreased by half by sodium azide. Its function is as follows. Catalyzes the hydrolysis of both di- and triphosphate nucleotides (NDPs and NTPs) and hydrolyze NTPs to nucleotide monophosphates (NMPs) in two distinct successive phosphate-releasing steps, with NDPs as intermediates and participates in the regulation of extracellular levels of nucleotides. By hydrolyzing proinflammatory ATP and platelet-activating ADP to AMP, it blocks platelet aggregation and supports blood flow. The sequence is that of Ectonucleoside triphosphate diphosphohydrolase 1 from Sus scrofa (Pig).